The following is a 142-amino-acid chain: Large ribosomal subunit protein uL11 (142 aa).

Belongs to the universal ribosomal protein uL11 family. Part of the ribosomal stalk of the 50S ribosomal subunit. Interacts with L10 and the large rRNA to form the base of the stalk. L10 forms an elongated spine to which L12 dimers bind in a sequential fashion forming a multimeric L10(L12)X complex. One or more lysine residues are methylated.

In terms of biological role, forms part of the ribosomal stalk which helps the ribosome interact with GTP-bound translation factors. In Mannheimia succiniciproducens (strain KCTC 0769BP / MBEL55E), this protein is Large ribosomal subunit protein uL11.